The sequence spans 497 residues: MKHFNLLSIILVIVLATSYIDAFTRNDFPEDFLFGAGTSAYQWEGAANEDGRTPSVWDTTSHCYNGSNGDIACDGYHKYKEDVKLMAEMGLESFRFSISWSRLIPNGRGRINPKGLLFYKNLIKELRSHGIEPHVTLYHYDLPQSLEDEYGGWINHKIIEDFTAFADVCFREFGEDVKLWTTINEATIFAFAFYGKDVRYGNCTTGNYCMETYIAGHNMLLAHASASNLYKLKYKSKQRGSIGLSIFALGLTPYTNSKDDEIATQRAKAFLYGWMLKPLVFGDYPDEMKRTLGSRLPVFSEEESEQVKGSSDFVGIIHYTTVYVTNQPAPYIFPSSTNKDFFTDMGAYIISTGNSSSFVFDAVPWGLEGVLQHIKHRYNNPPIYILENGSPMKHDSMLQDTPRVEYIQAYIGAVLNAIKSGSDTRGYFVWSLIDLFEVQVGYKSSFGMYYVNFSDPGRKRSPKLSASWYTGFLNGTIDVASQDMTQLQRNFSGSSSL.

Residues 1–22 (MKHFNLLSIILVIVLATSYIDA) form the signal peptide. Residue Gln-42 coordinates a beta-D-glucoside. Asn-65 carries N-linked (GlcNAc...) asparagine glycosylation. A beta-D-glucoside is bound by residues His-139 and 184-185 (NE). Glu-185 acts as the Proton donor in catalysis. N-linked (GlcNAc...) asparagine glycosylation occurs at Asn-202. Tyr-319 is an a beta-D-glucoside binding site. Asn-354 is a glycosylation site (N-linked (GlcNAc...) asparagine). Glu-387, Trp-430, and Phe-446 together coordinate a beta-D-glucoside. The active-site Nucleophile is the Glu-387. N-linked (GlcNAc...) asparagine glycosylation is found at Asn-452, Asn-474, and Asn-490.

Belongs to the glycosyl hydrolase 1 family.

The enzyme catalyses Hydrolysis of terminal, non-reducing beta-D-glucosyl residues with release of beta-D-glucose.. The sequence is that of Beta-glucosidase 8 from Arabidopsis thaliana (Mouse-ear cress).